The following is an 849-amino-acid chain: uncharacterized protein (849 aa).

2 helical membrane-spanning segments follow: residues 587 to 607 (VALG…LGLF) and 620 to 640 (AGIL…TGDW).

It localises to the cell membrane. This is an uncharacterized protein from Methanocaldococcus jannaschii (strain ATCC 43067 / DSM 2661 / JAL-1 / JCM 10045 / NBRC 100440) (Methanococcus jannaschii).